We begin with the raw amino-acid sequence, 504 residues long: L-amino-acid oxidase (504 aa).

An N-terminal signal peptide occupies residues 1–18 (MNVFFMFSLLFLAALGSC). C28 and C191 form a disulfide bridge. FAD contacts are provided by residues 61-62 (MS), 81-82 (EA), R89, and 105-108 (GPMR). Residue R108 participates in substrate binding. Residue N190 is glycosylated (N-linked (GlcNAc...) asparagine). Substrate is bound at residue H241. V279 is a binding site for FAD. A disulfide bridge links C349 with C430. N379 is a glycosylation site (N-linked (GlcNAc...) asparagine). Y390 provides a ligand contact to substrate. Residues E475 and 482 to 487 (GWIDST) contribute to the FAD site. Position 482-483 (482-483 (GW)) interacts with substrate.

It belongs to the flavin monoamine oxidase family. FIG1 subfamily. Homodimer; non-covalently linked. FAD serves as cofactor. As to expression, expressed by the venom gland.

It localises to the secreted. It carries out the reaction an L-alpha-amino acid + O2 + H2O = a 2-oxocarboxylate + H2O2 + NH4(+). The enzyme catalyses L-leucine + O2 + H2O = 4-methyl-2-oxopentanoate + H2O2 + NH4(+). In terms of biological role, catalyzes an oxidative deamination of predominantly hydrophobic and aromatic L-amino acids, thus producing hydrogen peroxide that may contribute to the diverse toxic effects of this enzyme. Shows activity on L-Leu. Exhibits diverse biological activities, such as hemorrhage, hemolysis, edema, antibacterial and antiparasitic activities, as well as regulation of platelet aggregation. Its effect on platelets is controversial, since it either induces aggregation or inhibits agonist-induced aggregation. These different effects are probably due to different experimental conditions. This protein induces apoptosis of cultured HeLa cells. This Gloydius halys (Chinese water mocassin) protein is L-amino-acid oxidase.